The following is a 59-amino-acid chain: Cytochrome c oxidase subunit 7 (59 aa).

Over 1–24 (MKNTIVQQQRFLQSIHKPTYLQRP) the chain is Mitochondrial matrix. A helical membrane pass occupies residues 25–47 (GSFALVYPYYAVMAGLGLYSLYA). Residues 48–59 (SGRVIFGKKDAF) are Mitochondrial intermembrane-facing.

This sequence belongs to the cytochrome c oxidase subunit 7 family. Component of the cytochrome c oxidase (complex IV, CIV), a multisubunit enzyme composed of a catalytic core of 3 subunits and several supernumerary subunits. The complex exists as a monomer or a dimer and forms supercomplexes (SCs) in the inner mitochondrial membrane with ubiquinol-cytochrome c oxidoreductase (cytochrome b-c1 complex, complex III, CIII).

The protein localises to the mitochondrion inner membrane. Its pathway is energy metabolism; oxidative phosphorylation. Its function is as follows. Component of the cytochrome c oxidase, the last enzyme in the mitochondrial electron transport chain which drives oxidative phosphorylation. The respiratory chain contains 3 multisubunit complexes succinate dehydrogenase (complex II, CII), ubiquinol-cytochrome c oxidoreductase (cytochrome b-c1 complex, complex III, CIII) and cytochrome c oxidase (complex IV, CIV), that cooperate to transfer electrons derived from NADH and succinate to molecular oxygen, creating an electrochemical gradient over the inner membrane that drives transmembrane transport and the ATP synthase. Cytochrome c oxidase is the component of the respiratory chain that catalyzes the reduction of oxygen to water. Electrons originating from reduced cytochrome c in the intermembrane space (IMS) are transferred via the dinuclear copper A center (CU(A)) of subunit 2 and heme A of subunit 1 to the active site in subunit 1, a binuclear center (BNC) formed by heme A3 and copper B (CU(B)). The BNC reduces molecular oxygen to 2 water molecules using 4 electrons from cytochrome c in the IMS and 4 protons from the mitochondrial matrix. This is Cytochrome c oxidase subunit 7 (cox7) from Schizosaccharomyces pombe (strain 972 / ATCC 24843) (Fission yeast).